A 1093-amino-acid chain; its full sequence is Protein translocase subunit SecA (1093 aa).

ATP contacts are provided by residues Gln-84, 102-106 (GEGKT), and Asp-491. 2 disordered regions span residues 837 to 869 (QNLQ…SEHE) and 904 to 1062 (SELE…TSEA). 3 stretches are compositionally biased toward basic and acidic residues: residues 904–937 (SELE…DATK), 944–971 (EELK…EKLK), and 978–1062 (PKDL…TSEA).

The protein belongs to the SecA family. Monomer and homodimer. Part of the essential Sec protein translocation apparatus which comprises SecA, SecYEG and auxiliary proteins SecDF. Other proteins may also be involved.

Its subcellular location is the cell membrane. It localises to the cytoplasm. It carries out the reaction ATP + H2O + cellular proteinSide 1 = ADP + phosphate + cellular proteinSide 2.. Its function is as follows. Part of the Sec protein translocase complex. Interacts with the SecYEG preprotein conducting channel. Has a central role in coupling the hydrolysis of ATP to the transfer of proteins into and across the cell membrane, serving as an ATP-driven molecular motor driving the stepwise translocation of polypeptide chains across the membrane. The protein is Protein translocase subunit SecA of Mycoplasmopsis synoviae (strain 53) (Mycoplasma synoviae).